The following is a 273-amino-acid chain: MVGFGLGTLRYVPEESKDKVTSDEDVLGTLLKVFQALFLNDFNKQSEILTMLPESVKSKYQDLLAVEHQGVKLLENRHQQQSTFKPEEILYKTLGFSVAQATSSLISAGKGVFVTKGLVPKGAVVSMYPGTVYQKYEPIFFQSIGNPFIFRCLDGVLIDGNDKGISKVVYRSCNGRDRLGPLKMSDSTWLTSEIHNPLAVGQYVNNCSNDRAANVCYQEFDVPAVFPIELKQYLPNIAYSYDKHSPLRCVVLVALRDINQGEELFSNYYTIVS.

The SET domain occupies 96-269 (FSVAQATSSL…QGEELFSNYY (174 aa)). Residue tyrosine 268 coordinates S-adenosyl-L-methionine.

It belongs to the class V-like SAM-binding methyltransferase superfamily.

The chain is SET domain-containing protein 9 (SETD9) from Pongo abelii (Sumatran orangutan).